Consider the following 188-residue polypeptide: Threonylcarbamoyl-AMP synthase (188 aa).

A YrdC-like domain is found at Gln3–Gln188.

This sequence belongs to the SUA5 family. TsaC subfamily.

The protein localises to the cytoplasm. The catalysed reaction is L-threonine + hydrogencarbonate + ATP = L-threonylcarbamoyladenylate + diphosphate + H2O. In terms of biological role, required for the formation of a threonylcarbamoyl group on adenosine at position 37 (t(6)A37) in tRNAs that read codons beginning with adenine. Catalyzes the conversion of L-threonine, HCO(3)(-)/CO(2) and ATP to give threonylcarbamoyl-AMP (TC-AMP) as the acyladenylate intermediate, with the release of diphosphate. In Shewanella denitrificans (strain OS217 / ATCC BAA-1090 / DSM 15013), this protein is Threonylcarbamoyl-AMP synthase.